A 506-amino-acid chain; its full sequence is Chromosomal replication initiator protein DnaA (506 aa).

Residues methionine 1–arginine 77 form a domain I, interacts with DnaA modulators region. Residues arginine 77–serine 162 are domain II. 2 stretches are compositionally biased toward basic and acidic residues: residues threonine 103–aspartate 112 and serine 121–glutamate 142. Residues threonine 103–glutamate 142 form a disordered region. The tract at residues proline 163 to asparagine 384 is domain III, AAA+ region. ATP is bound by residues glycine 210, glycine 212, lysine 213, and threonine 214. Residues glutamine 385–alanine 506 are domain IV, binds dsDNA.

This sequence belongs to the DnaA family. As to quaternary structure, oligomerizes as a right-handed, spiral filament on DNA at oriC.

It localises to the cytoplasm. Plays an essential role in the initiation and regulation of chromosomal replication. ATP-DnaA binds to the origin of replication (oriC) to initiate formation of the DNA replication initiation complex once per cell cycle. Binds the DnaA box (a 9 base pair repeat at the origin) and separates the double-stranded (ds)DNA. Forms a right-handed helical filament on oriC DNA; dsDNA binds to the exterior of the filament while single-stranded (ss)DNA is stabiized in the filament's interior. The ATP-DnaA-oriC complex binds and stabilizes one strand of the AT-rich DNA unwinding element (DUE), permitting loading of DNA polymerase. After initiation quickly degrades to an ADP-DnaA complex that is not apt for DNA replication. Binds acidic phospholipids. This chain is Chromosomal replication initiator protein DnaA, found in Xanthobacter autotrophicus (strain ATCC BAA-1158 / Py2).